Here is a 171-residue protein sequence, read N- to C-terminus: Co-chaperone protein HscB (171 aa).

The 73-residue stretch at 2–74 folds into the J domain; the sequence is DYFTLFGLPA…LTRAEYLLSL (73 aa).

Belongs to the HscB family. As to quaternary structure, interacts with HscA and stimulates its ATPase activity. Interacts with IscU.

Functionally, co-chaperone involved in the maturation of iron-sulfur cluster-containing proteins. Seems to help targeting proteins to be folded toward HscA. The protein is Co-chaperone protein HscB of Klebsiella pneumoniae (strain 342).